A 78-amino-acid chain; its full sequence is UPF0291 protein Exig_1097 (78 aa).

Positions 57 to 78 are disordered; that stretch reads EEGTDVTPEKLKQAQEEERNKQ. The segment covering 63-78 has biased composition (basic and acidic residues); the sequence is TPEKLKQAQEEERNKQ.

This sequence belongs to the UPF0291 family.

It is found in the cytoplasm. This is UPF0291 protein Exig_1097 from Exiguobacterium sibiricum (strain DSM 17290 / CCUG 55495 / CIP 109462 / JCM 13490 / 255-15).